We begin with the raw amino-acid sequence, 129 residues long: Small ribosomal subunit protein uS11 (129 aa).

It belongs to the universal ribosomal protein uS11 family. As to quaternary structure, part of the 30S ribosomal subunit. Interacts with proteins S7 and S18. Binds to IF-3.

Its function is as follows. Located on the platform of the 30S subunit, it bridges several disparate RNA helices of the 16S rRNA. Forms part of the Shine-Dalgarno cleft in the 70S ribosome. The protein is Small ribosomal subunit protein uS11 of Desulfovibrio desulfuricans (strain ATCC 27774 / DSM 6949 / MB).